A 542-amino-acid polypeptide reads, in one-letter code: Chaperonin GroEL 2 (542 aa).

Residues 30-33 (TLGP), lysine 51, 87-91 (DGTTT), glycine 415, and aspartate 496 each bind ATP.

The protein belongs to the chaperonin (HSP60) family. Forms a cylinder of 14 subunits composed of two heptameric rings stacked back-to-back. Interacts with the co-chaperonin GroES.

It localises to the cytoplasm. The catalysed reaction is ATP + H2O + a folded polypeptide = ADP + phosphate + an unfolded polypeptide.. In terms of biological role, together with its co-chaperonin GroES, plays an essential role in assisting protein folding. The GroEL-GroES system forms a nano-cage that allows encapsulation of the non-native substrate proteins and provides a physical environment optimized to promote and accelerate protein folding. The polypeptide is Chaperonin GroEL 2 (Sinorhizobium fredii (strain NBRC 101917 / NGR234)).